Consider the following 329-residue polypeptide: tRNA(Ile)-lysidine synthase (329 aa).

Position 37-42 (37-42 (SGGSDS)) interacts with ATP.

Belongs to the tRNA(Ile)-lysidine synthase family.

It localises to the cytoplasm. The enzyme catalyses cytidine(34) in tRNA(Ile2) + L-lysine + ATP = lysidine(34) in tRNA(Ile2) + AMP + diphosphate + H(+). Functionally, ligates lysine onto the cytidine present at position 34 of the AUA codon-specific tRNA(Ile) that contains the anticodon CAU, in an ATP-dependent manner. Cytidine is converted to lysidine, thus changing the amino acid specificity of the tRNA from methionine to isoleucine. This chain is tRNA(Ile)-lysidine synthase, found in Zymomonas mobilis subsp. mobilis (strain ATCC 31821 / ZM4 / CP4).